Consider the following 454-residue polypeptide: Phosphoglucosamine mutase (454 aa).

The Phosphoserine intermediate role is filled by S104. Positions 104, 244, 246, and 248 each coordinate Mg(2+). The residue at position 104 (S104) is a Phosphoserine.

The protein belongs to the phosphohexose mutase family. It depends on Mg(2+) as a cofactor. In terms of processing, activated by phosphorylation.

The catalysed reaction is alpha-D-glucosamine 1-phosphate = D-glucosamine 6-phosphate. In terms of biological role, catalyzes the conversion of glucosamine-6-phosphate to glucosamine-1-phosphate. This chain is Phosphoglucosamine mutase, found in Lacticaseibacillus paracasei (strain ATCC 334 / BCRC 17002 / CCUG 31169 / CIP 107868 / KCTC 3260 / NRRL B-441) (Lactobacillus paracasei).